We begin with the raw amino-acid sequence, 155 residues long: MASASTSDHSKQAGGAHSRQRDSGLLDQLGKFFGQEGSRKVPEKGKEPATRSVLMAPTTHKAHQAAGRQTDDSAVVHFFKNMMSPKKAPVQQKARSGASRAITKFIWGTDGQRPHYGAAGSSKSKEAYRGRRDGSGTLSSFFKMGKKGEGSPARR.

Disordered stretches follow at residues 1–70 (MASA…GRQT) and 109–155 (TDGQ…PARR). The residue at position 2 (A2) is an N-acetylalanine. Basic and acidic residues-rich tracts occupy residues 37–49 (GSRKVPEKGKEPA) and 123–134 (KSKEAYRGRRDG).

It belongs to the myelin basic protein family.

The protein localises to the myelin membrane. This protein may function to maintain proper structure of myelin. The polypeptide is Myelin basic protein (MBP) (Heterodontus francisci (Horn shark)).